An 89-amino-acid polypeptide reads, in one-letter code: Putative defensin-like protein 254 (89 aa).

Positions 1 to 20 are cleaved as a signal peptide; sequence MHNISFKLLLLCDLFLSSSS. Disulfide bonds link cysteine 31–cysteine 48 and cysteine 37–cysteine 55.

Belongs to the DEFL family.

It is found in the secreted. The polypeptide is Putative defensin-like protein 254 (Arabidopsis thaliana (Mouse-ear cress)).